The chain runs to 188 residues: Insulin-like peptide INSL6 (188 aa).

Residues 1–22 (MKQLCCSCLLWLGLLLAPFSQE) form the signal peptide. 3 disulfide bridges follow: Cys-33–Cys-169, Cys-45–Cys-182, and Cys-168–Cys-173. Positions 53–158 (FSMEEQSPMT…SGLFWGNHPQ (106 aa)) are cleaved as a propeptide — connecting peptide.

It belongs to the insulin family. In terms of tissue distribution, testis and prostate specific.

The protein localises to the secreted. May have a role in sperm development and fertilization. In Rattus norvegicus (Rat), this protein is Insulin-like peptide INSL6 (Insl6).